Here is a 432-residue protein sequence, read N- to C-terminus: Alcohol acyltransferase 9 (432 aa).

Active-site proton acceptor residues include His156 and Asp379.

This sequence belongs to the plant acyltransferase family.

The enzyme catalyses 2-(methylsulfanyl)acetyl-CoA + butan-1-ol = butyl 2-(methylsulfanyl)acetate + CoA. The catalysed reaction is ethanol + acetyl-CoA = ethyl acetate + CoA. It carries out the reaction butan-1-ol + acetyl-CoA = butyl acetate + CoA. It catalyses the reaction butan-1-ol + propanoyl-CoA = butyl propanoate + CoA. Involved in the biosynthesis of volatile esters which confer kiwifruit flavor. Alcohol acyl transferase that can use a wide range of alcohols as substrate to produce esters. Exhibits acetyl-CoA:alcohol O-acyltransferase activity. The polypeptide is Alcohol acyltransferase 9 (Actinidia chinensis var. chinensis (Chinese soft-hair kiwi)).